Consider the following 250-residue polypeptide: Cell division protein ZapD (250 aa).

It belongs to the ZapD family. Interacts with FtsZ.

Its subcellular location is the cytoplasm. Functionally, cell division factor that enhances FtsZ-ring assembly. Directly interacts with FtsZ and promotes bundling of FtsZ protofilaments, with a reduction in FtsZ GTPase activity. This chain is Cell division protein ZapD, found in Yersinia pseudotuberculosis serotype O:1b (strain IP 31758).